Consider the following 434-residue polypeptide: Methylenetetrahydrofolate--tRNA-(uracil-5-)-methyltransferase TrmFO (434 aa).

9–14 (GAGLAG) contributes to the FAD binding site.

It belongs to the MnmG family. TrmFO subfamily. Requires FAD as cofactor.

Its subcellular location is the cytoplasm. The catalysed reaction is uridine(54) in tRNA + (6R)-5,10-methylene-5,6,7,8-tetrahydrofolate + NADH + H(+) = 5-methyluridine(54) in tRNA + (6S)-5,6,7,8-tetrahydrofolate + NAD(+). It carries out the reaction uridine(54) in tRNA + (6R)-5,10-methylene-5,6,7,8-tetrahydrofolate + NADPH + H(+) = 5-methyluridine(54) in tRNA + (6S)-5,6,7,8-tetrahydrofolate + NADP(+). In terms of biological role, catalyzes the folate-dependent formation of 5-methyl-uridine at position 54 (M-5-U54) in all tRNAs. This chain is Methylenetetrahydrofolate--tRNA-(uracil-5-)-methyltransferase TrmFO, found in Listeria innocua serovar 6a (strain ATCC BAA-680 / CLIP 11262).